We begin with the raw amino-acid sequence, 340 residues long: Ketol-acid reductoisomerase (NADP(+)) (340 aa).

In terms of domain architecture, KARI N-terminal Rossmann spans Val-3 to Thr-182. Residues Tyr-26–Gln-29, Arg-49, Ser-53, and Asp-83–Gln-86 contribute to the NADP(+) site. The active site involves His-108. Gly-134 contacts NADP(+). Residues Thr-183–Val-328 form the KARI C-terminal knotted domain. Mg(2+) contacts are provided by Asp-191, Glu-195, Glu-227, and Glu-231. Position 252 (Ser-252) interacts with substrate.

The protein belongs to the ketol-acid reductoisomerase family. Requires Mg(2+) as cofactor.

The enzyme catalyses (2R)-2,3-dihydroxy-3-methylbutanoate + NADP(+) = (2S)-2-acetolactate + NADPH + H(+). It carries out the reaction (2R,3R)-2,3-dihydroxy-3-methylpentanoate + NADP(+) = (S)-2-ethyl-2-hydroxy-3-oxobutanoate + NADPH + H(+). Its pathway is amino-acid biosynthesis; L-isoleucine biosynthesis; L-isoleucine from 2-oxobutanoate: step 2/4. It participates in amino-acid biosynthesis; L-valine biosynthesis; L-valine from pyruvate: step 2/4. Functionally, involved in the biosynthesis of branched-chain amino acids (BCAA). Catalyzes an alkyl-migration followed by a ketol-acid reduction of (S)-2-acetolactate (S2AL) to yield (R)-2,3-dihydroxy-isovalerate. In the isomerase reaction, S2AL is rearranged via a Mg-dependent methyl migration to produce 3-hydroxy-3-methyl-2-ketobutyrate (HMKB). In the reductase reaction, this 2-ketoacid undergoes a metal-dependent reduction by NADPH to yield (R)-2,3-dihydroxy-isovalerate. The chain is Ketol-acid reductoisomerase (NADP(+)) from Streptococcus pneumoniae (strain JJA).